Consider the following 237-residue polypeptide: Ribosomal RNA small subunit methyltransferase G (237 aa).

S-adenosyl-L-methionine is bound by residues Gly78, Phe83, Ala129–Glu130, and Arg148.

It belongs to the methyltransferase superfamily. RNA methyltransferase RsmG family.

The protein localises to the cytoplasm. Its function is as follows. Specifically methylates the N7 position of a guanine in 16S rRNA. The protein is Ribosomal RNA small subunit methyltransferase G of Streptococcus equi subsp. zooepidemicus (strain H70).